The following is a 479-amino-acid chain: Altronate oxidoreductase (479 aa).

18 to 29 (IIQFGEGNFLRA) is a binding site for NAD(+).

It belongs to the mannitol dehydrogenase family. UxaB subfamily.

The catalysed reaction is D-altronate + NAD(+) = keto-D-tagaturonate + NADH + H(+). Its pathway is carbohydrate metabolism; pentose and glucuronate interconversion. The protein is Altronate oxidoreductase of Bacteroides thetaiotaomicron (strain ATCC 29148 / DSM 2079 / JCM 5827 / CCUG 10774 / NCTC 10582 / VPI-5482 / E50).